An 861-amino-acid chain; its full sequence is Leucine--tRNA ligase (861 aa).

A 'HIGH' region motif is present at residues 42-52 (PYPSGNLHMGH). The 'KMSKS' region motif lies at 620–624 (KMSKS). K623 serves as a coordination point for ATP.

The protein belongs to the class-I aminoacyl-tRNA synthetase family.

It is found in the cytoplasm. It carries out the reaction tRNA(Leu) + L-leucine + ATP = L-leucyl-tRNA(Leu) + AMP + diphosphate. In Baumannia cicadellinicola subsp. Homalodisca coagulata, this protein is Leucine--tRNA ligase.